Reading from the N-terminus, the 22-residue chain is Heliocin (22 aa).

Gln-1 bears the Pyrrolidone carboxylic acid mark. The interval 1 to 22 is disordered; the sequence is QRFIHPTYRPPPQPRRPVIMRA. Thr-7 is a glycosylation site (O-linked (GalNAc...) threonine).

Monomer. Hemolymph.

Its subcellular location is the secreted. In terms of biological role, has antibacterial activity, preferentially against Gram-negative bacteria. This is Heliocin from Heliothis virescens (Tobacco budworm moth).